The sequence spans 502 residues: MGTAKKEQQRRIREGNTKDGNLRVKGENFYRDGKRVKFLNMYKGGKSIRNAKGDLIRAAPLQSTDVPTARVQPDRRWFGNTRVISQDALQHFRDALGDKKNDSYQVLLRRNKLPMSLLEEKDTSESPTAKIIDTEPYGATFGPKAQRKKPRVAAASLEDLAKATDSDSQKYEEKKELDSTLGLMAATEQEDGWSQVAKEAIFHKGQSKRIWNELYKVIDSSDVVIHVLDARDPLGTRCKSVEEYMKKETPHKHLIYVLNKCDLVPTWLAAAWVKHLSKDRPTLAFHASITNSFGKGSLIQLLRQFSQLHKDRQQISVGFIGYPNTGKSSIINTLRKKKVCQVAPIPGETKVWQYITLMKRIFLIDCPGIVPPSAKDTEEDILFRGVVRVEHVSHPEQYIPAVLRRCKRHHLERTYEISGWADATEFIEMLARKQGRLLKGGEPDETGVAKQVLNDFNRGKIPWFVSPPDRDPQPETSKRPADSEPETAQEAPEPPANKRLRV.

The interval 1 to 20 (MGTAKKEQQRRIREGNTKDG) is disordered. The 162-residue stretch at 211-372 (WNELYKVIDS…LIDCPGIVPP (162 aa)) folds into the CP-type G domain. GTP contacts are provided by residues 321-328 (GYPNTGKS) and 365-369 (DCPGI). The segment at 459–502 (GKIPWFVSPPDRDPQPETSKRPADSEPETAQEAPEPPANKRLRV) is disordered. The span at 468–482 (PDRDPQPETSKRPAD) shows a compositional bias: basic and acidic residues.

Belongs to the TRAFAC class YlqF/YawG GTPase family. NOG2 subfamily.

Its subcellular location is the nucleus. It is found in the nucleolus. Functionally, GTPase that associates with pre-60S ribosomal subunits in the nucleolus and is required for their nuclear export and maturation. The polypeptide is Nucleolar GTP-binding protein 2 (NOG2) (Eremothecium gossypii (strain ATCC 10895 / CBS 109.51 / FGSC 9923 / NRRL Y-1056) (Yeast)).